The following is a 226-amino-acid chain: Probable GPI-anchored adhesin-like protein PGA28 (226 aa).

An N-terminal signal peptide occupies residues 1 to 26 (MKFFAYFAVIALSSASLINLFKRATA). The interval 119 to 209 (DTEATTGSDT…SQQTSSHAGG (91 aa)) is disordered. Positions 131 to 148 (KAATGATTSAGTGVTKTS) are enriched in low complexity. Polar residues predominate over residues 149–160 (ETGGVSSTANSE). A compositionally biased stretch (low complexity) spans 161 to 208 (AKSGSVTTSKSGSTSISESKTTSGSSSSGKSSSSTSSASSQQTSSHAG). Ser197 carries the GPI-anchor amidated serine lipid modification. A propeptide spans 198 to 226 (ASSQQTSSHAGGASGAFVSLLGLFAALLI) (removed in mature form).

In terms of processing, predicted to be a cleavage substrate for KEX2.

It localises to the cell membrane. Functionally, putative adhesin which is involved in cell adhesion and virulence. Plays a role in Candida-bacterial interactions and subsequent regulation of filamentation. The polypeptide is Probable GPI-anchored adhesin-like protein PGA28 (PGA28) (Candida albicans (strain SC5314 / ATCC MYA-2876) (Yeast)).